A 582-amino-acid chain; its full sequence is uncharacterized protein (582 aa).

The chain crosses the membrane as a helical span at residues 20–40 (GFWALGLFGAAINAFSAVLIV).

The protein localises to the membrane. This is an uncharacterized protein from Mycoplasma pneumoniae (strain ATCC 29342 / M129 / Subtype 1) (Mycoplasmoides pneumoniae).